A 93-amino-acid polypeptide reads, in one-letter code: Small integral membrane protein 41 (93 aa).

A helical transmembrane segment spans residues valine 38–leucine 58. Over residues arginine 71 to glutamate 80 the composition is skewed to basic and acidic residues. The segment at arginine 71–serine 93 is disordered.

The protein localises to the membrane. The chain is Small integral membrane protein 41 from Homo sapiens (Human).